Here is a 241-residue protein sequence, read N- to C-terminus: tRNA pseudouridine synthase B (241 aa).

The active-site Nucleophile is Asp-52.

This sequence belongs to the pseudouridine synthase TruB family. Type 1 subfamily.

The catalysed reaction is uridine(55) in tRNA = pseudouridine(55) in tRNA. Functionally, responsible for synthesis of pseudouridine from uracil-55 in the psi GC loop of transfer RNAs. This chain is tRNA pseudouridine synthase B, found in Chloroherpeton thalassium (strain ATCC 35110 / GB-78).